We begin with the raw amino-acid sequence, 455 residues long: Tubulin delta chain (455 aa).

Position 143-149 (143-149) interacts with GTP; sequence AGGTGSG.

This sequence belongs to the tubulin family. As to quaternary structure, found in a complex with TEDC1, TEDC2, TUBE1 and TUBD1. In terms of tissue distribution, highly expressed in testis.

The protein resides in the cell projection. The protein localises to the cilium. Its subcellular location is the cytoplasm. It is found in the cytoskeleton. It localises to the microtubule organizing center. The protein resides in the centrosome. The protein localises to the centriole. Its subcellular location is the nucleus. Acts as a positive regulator of hedgehog signaling and regulates ciliary function. This Mus musculus (Mouse) protein is Tubulin delta chain (Tubd1).